The primary structure comprises 216 residues: Deoxyribose-phosphate aldolase (216 aa).

D89 (proton donor/acceptor) is an active-site residue. K152 serves as the catalytic Schiff-base intermediate with acetaldehyde. The Proton donor/acceptor role is filled by K181.

The protein belongs to the DeoC/FbaB aldolase family. DeoC type 1 subfamily.

It localises to the cytoplasm. It catalyses the reaction 2-deoxy-D-ribose 5-phosphate = D-glyceraldehyde 3-phosphate + acetaldehyde. It functions in the pathway carbohydrate degradation; 2-deoxy-D-ribose 1-phosphate degradation; D-glyceraldehyde 3-phosphate and acetaldehyde from 2-deoxy-alpha-D-ribose 1-phosphate: step 2/2. Catalyzes a reversible aldol reaction between acetaldehyde and D-glyceraldehyde 3-phosphate to generate 2-deoxy-D-ribose 5-phosphate. The polypeptide is Deoxyribose-phosphate aldolase (Clostridium tetani (strain Massachusetts / E88)).